The sequence spans 283 residues: Bifunctional protein FolD (283 aa).

Residues 164–166 (GRS), Ser189, and Ile230 contribute to the NADP(+) site.

This sequence belongs to the tetrahydrofolate dehydrogenase/cyclohydrolase family. Homodimer.

The catalysed reaction is (6R)-5,10-methylene-5,6,7,8-tetrahydrofolate + NADP(+) = (6R)-5,10-methenyltetrahydrofolate + NADPH. It carries out the reaction (6R)-5,10-methenyltetrahydrofolate + H2O = (6R)-10-formyltetrahydrofolate + H(+). Its pathway is one-carbon metabolism; tetrahydrofolate interconversion. Its function is as follows. Catalyzes the oxidation of 5,10-methylenetetrahydrofolate to 5,10-methenyltetrahydrofolate and then the hydrolysis of 5,10-methenyltetrahydrofolate to 10-formyltetrahydrofolate. The polypeptide is Bifunctional protein FolD (Pelobacter propionicus (strain DSM 2379 / NBRC 103807 / OttBd1)).